Consider the following 457-residue polypeptide: Adenylosuccinate synthetase isozyme 2 A (457 aa).

Residues 40–46 (GDEGKGK) and 68–70 (GHT) contribute to the GTP site. D41 (proton acceptor) is an active-site residue. Residues D41 and G68 each contribute to the Mg(2+) site. D41 contributes to the substrate binding site. IMP-binding positions include 41-44 (DEGK), 66-69 (NAGH), T163, R177, N256, T271, and R335. H69 serves as the catalytic Proton donor. Position 331 to 337 (331 to 337 (VTTGRKR)) interacts with substrate. GTP-binding positions include R337, 363-365 (KLD), and 445-448 (GVGK).

It belongs to the adenylosuccinate synthetase family. In terms of assembly, homodimer. Mg(2+) is required as a cofactor.

It is found in the cytoplasm. The protein localises to the mitochondrion. It catalyses the reaction IMP + L-aspartate + GTP = N(6)-(1,2-dicarboxyethyl)-AMP + GDP + phosphate + 2 H(+). It functions in the pathway purine metabolism; AMP biosynthesis via de novo pathway; AMP from IMP: step 1/2. Its activity is regulated as follows. Inhibited competitively by AMP and IMP and non-competitively by fructose 1,6-bisphosphate. Its function is as follows. Plays an important role in the de novo pathway and in the salvage pathway of purine nucleotide biosynthesis. Catalyzes the first committed step in the biosynthesis of AMP from IMP. The chain is Adenylosuccinate synthetase isozyme 2 A (adss2-a) from Xenopus tropicalis (Western clawed frog).